Reading from the N-terminus, the 394-residue chain is tRNA-specific 2-thiouridylase MnmA (394 aa).

ATP is bound by residues 13 to 20 and methionine 39; that span reads GLSGGVDS. Residues 99–101 form an interaction with target base in tRNA region; the sequence is NPD. Cysteine 104 serves as the catalytic Nucleophile. Residues cysteine 104 and cysteine 202 are joined by a disulfide bond. Glycine 128 contacts ATP. The interval 152–154 is interaction with tRNA; it reads KDQ. Residue cysteine 202 is the Cysteine persulfide intermediate of the active site. The interval 329–330 is interaction with tRNA; sequence RY.

This sequence belongs to the MnmA/TRMU family.

Its subcellular location is the cytoplasm. It carries out the reaction S-sulfanyl-L-cysteinyl-[protein] + uridine(34) in tRNA + AH2 + ATP = 2-thiouridine(34) in tRNA + L-cysteinyl-[protein] + A + AMP + diphosphate + H(+). In terms of biological role, catalyzes the 2-thiolation of uridine at the wobble position (U34) of tRNA, leading to the formation of s(2)U34. The polypeptide is tRNA-specific 2-thiouridylase MnmA (Polaromonas naphthalenivorans (strain CJ2)).